We begin with the raw amino-acid sequence, 222 residues long: Deoxyribose-phosphate aldolase (222 aa).

Aspartate 89 serves as the catalytic Proton donor/acceptor. The Schiff-base intermediate with acetaldehyde role is filled by lysine 152. Lysine 181 functions as the Proton donor/acceptor in the catalytic mechanism.

Belongs to the DeoC/FbaB aldolase family. DeoC type 1 subfamily.

The protein resides in the cytoplasm. It catalyses the reaction 2-deoxy-D-ribose 5-phosphate = D-glyceraldehyde 3-phosphate + acetaldehyde. Its pathway is carbohydrate degradation; 2-deoxy-D-ribose 1-phosphate degradation; D-glyceraldehyde 3-phosphate and acetaldehyde from 2-deoxy-alpha-D-ribose 1-phosphate: step 2/2. Catalyzes a reversible aldol reaction between acetaldehyde and D-glyceraldehyde 3-phosphate to generate 2-deoxy-D-ribose 5-phosphate. This chain is Deoxyribose-phosphate aldolase, found in Clostridium novyi (strain NT).